A 197-amino-acid chain; its full sequence is ATP-dependent Clp protease proteolytic subunit 1 (197 aa).

Serine 88 acts as the Nucleophile in catalysis. Histidine 113 is an active-site residue.

The protein belongs to the peptidase S14 family. Fourteen ClpP subunits assemble into 2 heptameric rings which stack back to back to give a disk-like structure with a central cavity, resembling the structure of eukaryotic proteasomes.

Its subcellular location is the cytoplasm. The catalysed reaction is Hydrolysis of proteins to small peptides in the presence of ATP and magnesium. alpha-casein is the usual test substrate. In the absence of ATP, only oligopeptides shorter than five residues are hydrolyzed (such as succinyl-Leu-Tyr-|-NHMec, and Leu-Tyr-Leu-|-Tyr-Trp, in which cleavage of the -Tyr-|-Leu- and -Tyr-|-Trp bonds also occurs).. In terms of biological role, cleaves peptides in various proteins in a process that requires ATP hydrolysis. Has a chymotrypsin-like activity. Plays a major role in the degradation of misfolded proteins. The polypeptide is ATP-dependent Clp protease proteolytic subunit 1 (Leifsonia xyli subsp. xyli (strain CTCB07)).